We begin with the raw amino-acid sequence, 287 residues long: Flagellin (287 aa).

Belongs to the bacterial flagellin family.

The protein resides in the secreted. It localises to the bacterial flagellum. Functionally, flagellin is the subunit protein which polymerizes to form the filaments of bacterial flagella. The protein is Flagellin (flaA) of Listeria monocytogenes serovar 1/2a (strain ATCC BAA-679 / EGD-e).